We begin with the raw amino-acid sequence, 177 residues long: Large ribosomal subunit protein bL31m (177 aa).

The transit peptide at 1–14 directs the protein to the mitochondrion; the sequence is MLKSIFAKRFASTG. Residues 36-118 are sufficient for general mitochondrial translation; that stretch reads KSRPAIYHQF…FSVDSTTPNS (83 aa). Residues 87 to 177 form a sufficient for dosage suppression of COX2 mutation region; it reads LVVVDANSGG…KLASKKRDKK (91 aa). Positions 111–123 are enriched in polar residues; sequence VDSTTPNSSSETV. The interval 111–144 is disordered; it reads VDSTTPNSSSETVELSEENKKKTQIKKEEKEDVS. The segment covering 127 to 144 has biased composition (basic and acidic residues); sequence EENKKKTQIKKEEKEDVS.

It belongs to the bacterial ribosomal protein bL31 family. Highly divergent. As to quaternary structure, component of the mitochondrial large ribosomal subunit (mt-LSU). Mature yeast 74S mitochondrial ribosomes consist of a small (37S) and a large (54S) subunit. The 37S small subunit contains a 15S ribosomal RNA (15S mt-rRNA) and 34 different proteins. The 54S large subunit contains a 21S rRNA (21S mt-rRNA) and 46 different proteins.

Its subcellular location is the mitochondrion. Component of the mitochondrial ribosome (mitoribosome), a dedicated translation machinery responsible for the synthesis of mitochondrial genome-encoded proteins, including at least some of the essential transmembrane subunits of the mitochondrial respiratory chain. The mitoribosomes are attached to the mitochondrial inner membrane and translation products are cotranslationally integrated into the membrane. Overexpression of bL31m suppresses mutations in the COX2 leader peptide-encoding and initiation codon regions. This Saccharomyces cerevisiae (strain ATCC 204508 / S288c) (Baker's yeast) protein is Large ribosomal subunit protein bL31m (MRPL36).